We begin with the raw amino-acid sequence, 20 residues long: Fibrinogen beta chain (20 aa).

The residue at position 5 (tyrosine 5) is a Sulfotyrosine.

As to quaternary structure, heterohexamer; disulfide linked. Contains 2 sets of 3 non-identical chains (alpha, beta and gamma). The 2 heterotrimers are in head to head conformation with the N-termini in a small central domain. In terms of processing, conversion of fibrinogen to fibrin is triggered by thrombin, which cleaves fibrinopeptides A and B from alpha and beta chains, and thus exposes the N-terminal polymerization sites responsible for the formation of the soft clot.

The protein localises to the secreted. Its function is as follows. Cleaved by the protease thrombin to yield monomers which, together with fibrinogen alpha (FGA) and fibrinogen gamma (FGG), polymerize to form an insoluble fibrin matrix. Fibrin has a major function in hemostasis as one of the primary components of blood clots. In addition, functions during the early stages of wound repair to stabilize the lesion and guide cell migration during re-epithelialization. Was originally thought to be essential for platelet aggregation, based on in vitro studies using anticoagulated blood. However subsequent studies have shown that it is not absolutely required for thrombus formation in vivo. Enhances expression of SELP in activated platelets. Maternal fibrinogen is essential for successful pregnancy. Fibrin deposition is also associated with infection, where it protects against IFNG-mediated hemorrhage. May also facilitate the antibacterial immune response via both innate and T-cell mediated pathways. The sequence is that of Fibrinogen beta chain (FGB) from Capra hircus (Goat).